The sequence spans 232 residues: UPF0502 protein Aave_3438 (232 aa).

The protein belongs to the UPF0502 family.

The sequence is that of UPF0502 protein Aave_3438 from Paracidovorax citrulli (strain AAC00-1) (Acidovorax citrulli).